A 335-amino-acid chain; its full sequence is Holliday junction branch migration complex subunit RuvB (335 aa).

The interval 4-184 (ADRLVSAEVL…FGIVQRLEFY (181 aa)) is large ATPase domain (RuvB-L). ATP contacts are provided by residues I23, R24, G65, K68, T69, T70, 131 to 133 (EDY), R174, Y184, and R221. A Mg(2+)-binding site is contributed by T69. The interval 185–255 (NVDDLQSIVS…IATRALDMLS (71 aa)) is small ATPAse domain (RuvB-S). The segment at 258–335 (AAGFDYLDRK…RHFGMVRNQE (78 aa)) is head domain (RuvB-H). R294, R313, and R318 together coordinate DNA.

The protein belongs to the RuvB family. Homohexamer. Forms an RuvA(8)-RuvB(12)-Holliday junction (HJ) complex. HJ DNA is sandwiched between 2 RuvA tetramers; dsDNA enters through RuvA and exits via RuvB. An RuvB hexamer assembles on each DNA strand where it exits the tetramer. Each RuvB hexamer is contacted by two RuvA subunits (via domain III) on 2 adjacent RuvB subunits; this complex drives branch migration. In the full resolvosome a probable DNA-RuvA(4)-RuvB(12)-RuvC(2) complex forms which resolves the HJ.

The protein resides in the cytoplasm. The catalysed reaction is ATP + H2O = ADP + phosphate + H(+). In terms of biological role, the RuvA-RuvB-RuvC complex processes Holliday junction (HJ) DNA during genetic recombination and DNA repair, while the RuvA-RuvB complex plays an important role in the rescue of blocked DNA replication forks via replication fork reversal (RFR). RuvA specifically binds to HJ cruciform DNA, conferring on it an open structure. The RuvB hexamer acts as an ATP-dependent pump, pulling dsDNA into and through the RuvAB complex. RuvB forms 2 homohexamers on either side of HJ DNA bound by 1 or 2 RuvA tetramers; 4 subunits per hexamer contact DNA at a time. Coordinated motions by a converter formed by DNA-disengaged RuvB subunits stimulates ATP hydrolysis and nucleotide exchange. Immobilization of the converter enables RuvB to convert the ATP-contained energy into a lever motion, pulling 2 nucleotides of DNA out of the RuvA tetramer per ATP hydrolyzed, thus driving DNA branch migration. The RuvB motors rotate together with the DNA substrate, which together with the progressing nucleotide cycle form the mechanistic basis for DNA recombination by continuous HJ branch migration. Branch migration allows RuvC to scan DNA until it finds its consensus sequence, where it cleaves and resolves cruciform DNA. The sequence is that of Holliday junction branch migration complex subunit RuvB from Photorhabdus laumondii subsp. laumondii (strain DSM 15139 / CIP 105565 / TT01) (Photorhabdus luminescens subsp. laumondii).